Here is a 382-residue protein sequence, read N- to C-terminus: Intermediate transcription factor 3 large subunit (382 aa).

Belongs to the poxviruses A23 family. Heterodimer of a 45 kDa and a 32 kDa subunit.

Functionally, acts with RNA polymerase to initiate transcription from intermediate gene promoters. The protein is Intermediate transcription factor 3 large subunit (VITF3L) of Camelus.